The chain runs to 832 residues: Armadillo segment polarity protein (832 aa).

The span at 1–20 (MSYQMPQNRTMSHNPYNSSD) shows a compositional bias: polar residues. A disordered region spans residues 1–24 (MSYQMPQNRTMSHNPYNSSDMPMP). ARM repeat units follow at residues 146 to 185 (NYQD…QLSK), 188 to 228 (ASRH…NLSH), 230 to 269 (RQGL…NLLL), 272 to 311 (DGSK…ILAY), 356 to 395 (SSNK…NLSD), 397 to 434 (ATKV…NLTC), 483 to 524 (SESA…NLAL), 594 to 634 (ELNR…ELAV), and 636 to 675 (KEVA…KMSE). The disordered stretch occupies residues 721 to 832 (AYEGLYGQGP…QVAAWYDTDL (112 aa)). Residues 767-777 (PAGSNPNAGNN) are compositionally biased toward low complexity.

It belongs to the beta-catenin family.

Its subcellular location is the cytoplasm. It is found in the cell membrane. The protein resides in the cell junction. The protein localises to the adherens junction. Its function is as follows. May associate with CadN and participate in the transmission of developmental information. Can associate with alpha-catenin. Accumulates through wg signaling; arm function in wg signal transduction is required early in development for determination of neuroblast fate. Arm and Abl proteins function cooperatively at adherens junctions in both the CNS and epidermis. This chain is Armadillo segment polarity protein, found in Aedes aegypti (Yellowfever mosquito).